The chain runs to 189 residues: Large ribosomal subunit protein bL9 (189 aa).

The protein belongs to the bacterial ribosomal protein bL9 family.

In terms of biological role, binds to the 23S rRNA. The protein is Large ribosomal subunit protein bL9 of Brucella melitensis biotype 2 (strain ATCC 23457).